Here is a 148-residue protein sequence, read N- to C-terminus: MIKIKLTHPDCMPKIGSEDAAGMDLRAFFGTNPAADLRAIAPGKSLMIDTGVAVEIPRGWFGLVVPRSSLGKRHLMIANTAGVIDSDYRGTIKMNLYNYGSEMQTLENFERLCQLVVLPHYSTHNFKIVDELEETIRGEGGFGSSGSK.

The protein belongs to the dUTPase family. The cofactor is Mg(2+).

The catalysed reaction is dUTP + H2O = dUMP + diphosphate + H(+). Its pathway is pyrimidine metabolism; dUMP biosynthesis; dUMP from dCTP (dUTP route): step 2/2. Its function is as follows. This enzyme decreases the intracellular concentration of dUTP so that uracil cannot be incorporated into viral progeny DNA. This activity is sufficient to exclude uracil from the DNA during phage replication. In the case of dUTPase mutant phages, the host dUTPase activity is not sufficient to exclude uracil from T5 DNA and uracil are incorporated, leading to decreased phage viability. The polypeptide is Deoxyuridine 5'-triphosphate nucleotidohydrolase (DUT) (Escherichia coli (Enterobacteria phage T5)).